The primary structure comprises 215 residues: 3-isopropylmalate dehydratase small subunit (215 aa).

The protein belongs to the LeuD family. LeuD type 1 subfamily. In terms of assembly, heterodimer of LeuC and LeuD.

The catalysed reaction is (2R,3S)-3-isopropylmalate = (2S)-2-isopropylmalate. Its pathway is amino-acid biosynthesis; L-leucine biosynthesis; L-leucine from 3-methyl-2-oxobutanoate: step 2/4. Catalyzes the isomerization between 2-isopropylmalate and 3-isopropylmalate, via the formation of 2-isopropylmaleate. The polypeptide is 3-isopropylmalate dehydratase small subunit (Xylella fastidiosa (strain M23)).